Consider the following 308-residue polypeptide: D-alanine--D-alanine ligase (308 aa).

The ATP-grasp domain occupies 106–305 (KMLWKAFGLP…FEQLVVKILE (200 aa)). 136–191 (VEKLGLPLMVKPSLEGSSVGLTKVNAIDDLKSAVEFALQYDETVLIEEWLSGDELT) contacts ATP. Positions 259, 272, and 274 each coordinate Mg(2+).

The protein belongs to the D-alanine--D-alanine ligase family. The cofactor is Mg(2+). Mn(2+) is required as a cofactor.

Its subcellular location is the cytoplasm. The enzyme catalyses 2 D-alanine + ATP = D-alanyl-D-alanine + ADP + phosphate + H(+). It functions in the pathway cell wall biogenesis; peptidoglycan biosynthesis. Cell wall formation. The chain is D-alanine--D-alanine ligase from Histophilus somni (strain 2336) (Haemophilus somnus).